The chain runs to 475 residues: 3-hydroxyacyl-CoA dehydrogenase-like protein LAM1 (475 aa).

99-104 (GTRPFA) is a binding site for NAD(+). Lys-149 is a CoA binding site. Asn-245 contacts NAD(+).

The protein belongs to the 3-hydroxyacyl-CoA dehydrogenase family.

It functions in the pathway mycotoxin biosynthesis. In terms of biological role, 3-hydroxyacyl-CoA dehydrogenase-like protein; part of the Tox1A locus, one of the 2 loci that mediate the biosynthesis of T-toxin, a family of linear polyketides 37 to 45 carbons in length, of which the major component is 41 carbons, and which leads to high virulence to maize. One of the PKSs (PKS1 or PKS2) could synthesize a precursor, used subsequently by the other PKS as starter unit, to add additional carbons. Variability in the length of the final carbon backbone C35-47 could be achieved by varying the number of condensation cycles, or use of different starter or extender units or might be due to decarboxylation of the penultimate product, catalyzed by DEC1. Additional proteins are required for the biosynthesis of T-toxin, including oxidoreductases RED1, RED2, RED3, LAM1 and OXI1, as well as esterase TOX9. The chain is 3-hydroxyacyl-CoA dehydrogenase-like protein LAM1 from Cochliobolus heterostrophus (strain C4 / ATCC 48331 / race T) (Southern corn leaf blight fungus).